The chain runs to 554 residues: ATP synthase subunit alpha (554 aa).

An ATP-binding site is contributed by 173 to 180 (GDRQTGKT). Positions 531–554 (SHLAAEKVRKHVPPSKPTTQRTAG) are disordered.

The protein belongs to the ATPase alpha/beta chains family. As to quaternary structure, F-type ATPases have 2 components, CF(1) - the catalytic core - and CF(0) - the membrane proton channel. CF(1) has five subunits: alpha(3), beta(3), gamma(1), delta(1), epsilon(1). CF(0) has three main subunits: a(1), b(2) and c(9-12). The alpha and beta chains form an alternating ring which encloses part of the gamma chain. CF(1) is attached to CF(0) by a central stalk formed by the gamma and epsilon chains, while a peripheral stalk is formed by the delta and b chains.

The protein resides in the cell membrane. The enzyme catalyses ATP + H2O + 4 H(+)(in) = ADP + phosphate + 5 H(+)(out). Functionally, produces ATP from ADP in the presence of a proton gradient across the membrane. The alpha chain is a regulatory subunit. The protein is ATP synthase subunit alpha of Acidothermus cellulolyticus (strain ATCC 43068 / DSM 8971 / 11B).